The primary structure comprises 496 residues: Cytochrome P450 monooxygenase ausR (496 aa).

A helical transmembrane segment spans residues 12–32 (IGLYILWTIPVLFVIFKLLAP). C435 contacts heme.

The protein belongs to the cytochrome P450 family. Heme is required as a cofactor.

The protein resides in the membrane. It participates in secondary metabolite biosynthesis; terpenoid biosynthesis. Its function is as follows. Cytochrome P450 monooxygenase; part of the gene cluster B that mediates the biosynthesis of the fungal meroterpenoid acetoxydehydroaustin. The first step of the pathway is the synthesis of 3,5-dimethylorsellinic acid by the polyketide synthase ausA. 3,5-dimethylorsellinic acid is then prenylated by the polyprenyl transferase ausN. Further epoxidation by the FAD-dependent monooxygenase ausM and cyclization by the probable terpene cyclase ausL lead to the formation of protoaustinoid A. Protoaustinoid A is then oxidized to spiro-lactone preaustinoid A3 by the combined action of the FAD-binding monooxygenases ausB and ausC, and the dioxygenase ausE. Acid-catalyzed keto-rearrangement and ring contraction of the tetraketide portion of preaustinoid A3 by ausJ lead to the formation of preaustinoid A4. The aldo-keto reductase ausK, with the help of ausH, is involved in the next step by transforming preaustinoid A4 into isoaustinone which is in turn hydroxylated by the P450 monooxygenase ausI to form austinolide. The cytochrome P450 monooxygenase ausG then modifies austinolide to austinol. Austinol is further acetylated to austin by the O-acetyltransferase ausP, which spontaneously changes to dehydroaustin. The cytochrome P450 monooxygenase then converts dehydroaustin is into 7-dehydrodehydroaustin. The hydroxylation catalyzed by ausR permits the second O-acetyltransferase ausQ to add an additional acetyl group to the molecule, leading to the formation of acetoxydehydroaustin. Due to genetic rearrangements of the clusters and the subsequent loss of some enzymes, the end product of the Penicillium brasilianum austinoid biosynthesis clusters is acetoxydehydroaustin. This Penicillium brasilianum protein is Cytochrome P450 monooxygenase ausR.